A 103-amino-acid polypeptide reads, in one-letter code: MRPIHIAQLDKARPVLILTREVVRPHLTNVTVAPITTTVRGLATEVPVDAVNGLNQPSVVSCDNTQTIPVCDLGRQIGYLLASQEPALAEAIGNAFDLDWVVA.

It belongs to the PemK/MazF family. In terms of assembly, forms a complex with cognate antitoxin MazE3.

In terms of biological role, toxic component of a type II toxin-antitoxin (TA) system. Acts as an endoribonuclease, cleaving in U-rich regions. Neutralized by cognate antitoxin MazE3. The protein is Endoribonuclease MazF3 (mazF3) of Mycobacterium tuberculosis (strain CDC 1551 / Oshkosh).